The chain runs to 164 residues: Ribosome maturation factor RimM (164 aa).

The 72-residue stretch at 90-161 (KGSYFIADLI…TVTIKPLEIW (72 aa)) folds into the PRC barrel domain.

It belongs to the RimM family. As to quaternary structure, binds ribosomal protein uS19.

The protein resides in the cytoplasm. Functionally, an accessory protein needed during the final step in the assembly of 30S ribosomal subunit, possibly for assembly of the head region. Essential for efficient processing of 16S rRNA. May be needed both before and after RbfA during the maturation of 16S rRNA. It has affinity for free ribosomal 30S subunits but not for 70S ribosomes. The sequence is that of Ribosome maturation factor RimM from Clostridium botulinum (strain Hall / ATCC 3502 / NCTC 13319 / Type A).